A 220-amino-acid chain; its full sequence is MPKFNANGLLRSFAAEMKKPWTAESLWYETVAKHPPTFQYARRIVPLYDPNKVKSRGKRLRKSMYQPQEIQWPEDKLRKRFYRDHPWELARPQIIAENDGNDQQYCDWSHMDQPRKALSGESVVQRTLWLIENSNMPVENAYDQARKEFYHLRAEQEIQQRVAHDQAQALGAVFTKSDLELGYEMDQNALNSWFDNASQYAEANRTKFTDPSVDISKTTQ.

Belongs to the mitochondrion-specific ribosomal protein mS23 family. Component of the mitochondrial small ribosomal subunit (mt-SSU). Mature yeast 74S mitochondrial ribosomes consist of a small (37S) and a large (54S) subunit. The 37S small subunit contains a 15S ribosomal RNA (15S mt-rRNA) and at least 32 different proteins. The 54S large subunit contains a 21S rRNA (21S mt-rRNA) and at least 45 different proteins.

The protein resides in the mitochondrion. Its function is as follows. Component of the mitochondrial ribosome (mitoribosome), a dedicated translation machinery responsible for the synthesis of mitochondrial genome-encoded proteins, including at least some of the essential transmembrane subunits of the mitochondrial respiratory chain. The mitoribosomes are attached to the mitochondrial inner membrane and translation products are cotranslationally integrated into the membrane. The protein is Small ribosomal subunit protein mS23 (rsm25) of Schizosaccharomyces pombe (strain 972 / ATCC 24843) (Fission yeast).